Reading from the N-terminus, the 50-residue chain is MGQKWKLYEIKDGKVIRKNKFCPRCGPGVFMADHGDRWACGKCGYTEWKK.

Zn(2+) is bound by residues C22, C25, C40, and C43. A C4-type zinc finger spans residues 22–43; that stretch reads CPRCGPGVFMADHGDRWACGKC.

This sequence belongs to the eukaryotic ribosomal protein eS31 family. Part of the 30S ribosomal subunit. Zn(2+) serves as cofactor.

The protein is Small ribosomal subunit protein eS31 of Pyrococcus furiosus (strain ATCC 43587 / DSM 3638 / JCM 8422 / Vc1).